Here is a 446-residue protein sequence, read N- to C-terminus: N-succinylarginine dihydrolase (446 aa).

Substrate-binding positions include A19 to S28, N110, and H137 to R138. Residue E174 is part of the active site. R213 contacts substrate. H249 is an active-site residue. Substrate contacts are provided by D251 and N364. Catalysis depends on C370, which acts as the Nucleophile.

Belongs to the succinylarginine dihydrolase family. As to quaternary structure, homodimer.

The catalysed reaction is N(2)-succinyl-L-arginine + 2 H2O + 2 H(+) = N(2)-succinyl-L-ornithine + 2 NH4(+) + CO2. It functions in the pathway amino-acid degradation; L-arginine degradation via AST pathway; L-glutamate and succinate from L-arginine: step 2/5. In terms of biological role, catalyzes the hydrolysis of N(2)-succinylarginine into N(2)-succinylornithine, ammonia and CO(2). In Paraburkholderia xenovorans (strain LB400), this protein is N-succinylarginine dihydrolase.